We begin with the raw amino-acid sequence, 251 residues long: 2,3-bisphosphoglycerate-dependent phosphoglycerate mutase (251 aa).

Substrate contacts are provided by residues 13–20, 26–27, arginine 65, 92–95, lysine 103, 119–120, and 186–187; these read RHGESEWN, TG, ERHY, RR, and GN. Residue histidine 14 is the Tele-phosphohistidine intermediate of the active site. The Proton donor/acceptor role is filled by glutamate 92.

Belongs to the phosphoglycerate mutase family. BPG-dependent PGAM subfamily.

The enzyme catalyses (2R)-2-phosphoglycerate = (2R)-3-phosphoglycerate. It functions in the pathway carbohydrate degradation; glycolysis; pyruvate from D-glyceraldehyde 3-phosphate: step 3/5. In terms of biological role, catalyzes the interconversion of 2-phosphoglycerate and 3-phosphoglycerate. The sequence is that of 2,3-bisphosphoglycerate-dependent phosphoglycerate mutase from Rhodococcus opacus (strain B4).